We begin with the raw amino-acid sequence, 57 residues long: uncharacterized protein (57 aa).

This is an uncharacterized protein from Halorubrum sp. PV6 (HRPV-1).